The chain runs to 540 residues: Testis-specific chromodomain protein Y 1 (540 aa).

One can recognise a Chromo domain in the interval 6-66; the sequence is FEVEAIVDKR…RQTEKQKKLT (61 aa). The interval 76–106 is disordered; sequence NNARRRTSRSTKANYSKNSPKTPVTDKHHRS. Polar residues predominate over residues 87–97; it reads KANYSKNSPKT.

In terms of assembly, interacts (via chromo domain) with histone H3K9me3. As to expression, testis-specific. Detected in spermatids (at protein level).

It localises to the nucleus. It catalyses the reaction L-lysyl-[protein] + acetyl-CoA = N(6)-acetyl-L-lysyl-[protein] + CoA + H(+). In terms of biological role, has histone acetyltransferase activity, with a preference for histone H4. The chain is Testis-specific chromodomain protein Y 1 (CDY1) from Homo sapiens (Human).